We begin with the raw amino-acid sequence, 256 residues long: Small ribosomal subunit protein eS1 (256 aa).

Residues 1–18 (MAVGKNKRLSKGKKGIKK) are compositionally biased toward basic residues. The tract at residues 1-20 (MAVGKNKRLSKGKKGIKKRT) is disordered. N-acetylalanine; partial is present on Ala-2.

Belongs to the eukaryotic ribosomal protein eS1 family. Component of the small ribosomal subunit. Mature ribosomes consist of a small (40S) and a large (60S) subunit. The 40S subunit contains about 33 different proteins and 1 molecule of RNA (18S). The 60S subunit contains about 49 different proteins and 3 molecules of RNA (25S, 5.8S and 5S).

It is found in the cytoplasm. This chain is Small ribosomal subunit protein eS1 (rps1), found in Aspergillus flavus (strain ATCC 200026 / FGSC A1120 / IAM 13836 / NRRL 3357 / JCM 12722 / SRRC 167).